A 119-amino-acid polypeptide reads, in one-letter code: Large ribosomal subunit protein bL19 (119 aa).

It belongs to the bacterial ribosomal protein bL19 family.

This protein is located at the 30S-50S ribosomal subunit interface and may play a role in the structure and function of the aminoacyl-tRNA binding site. The sequence is that of Large ribosomal subunit protein bL19 from Borreliella afzelii (strain PKo) (Borrelia afzelii).